The following is a 351-amino-acid chain: Tetraacyldisaccharide 4'-kinase (351 aa).

61–68 (TAGGTGKT) lines the ATP pocket.

It belongs to the LpxK family.

The catalysed reaction is a lipid A disaccharide + ATP = a lipid IVA + ADP + H(+). The protein operates within glycolipid biosynthesis; lipid IV(A) biosynthesis; lipid IV(A) from (3R)-3-hydroxytetradecanoyl-[acyl-carrier-protein] and UDP-N-acetyl-alpha-D-glucosamine: step 6/6. In terms of biological role, transfers the gamma-phosphate of ATP to the 4'-position of a tetraacyldisaccharide 1-phosphate intermediate (termed DS-1-P) to form tetraacyldisaccharide 1,4'-bis-phosphate (lipid IVA). This chain is Tetraacyldisaccharide 4'-kinase, found in Xanthomonas campestris pv. campestris (strain 8004).